Consider the following 304-residue polypeptide: tRNA-5-methyluridine(54) 2-sulfurtransferase (304 aa).

Residues Cys-3, Cys-6, Cys-22, and His-25 each coordinate Zn(2+). ATP contacts are provided by Ala-53 and Ile-79. [4Fe-4S] cluster-binding residues include Cys-131 and Cys-134. Positions 138 and 157 each coordinate ATP. Position 224 (Cys-224) interacts with [4Fe-4S] cluster. Residues Cys-274, Cys-277, Cys-286, and Cys-289 each contribute to the Zn(2+) site.

The protein belongs to the TtcA family. TtuA subfamily. In terms of assembly, homodimer. [4Fe-4S] cluster serves as cofactor. Mg(2+) is required as a cofactor.

It carries out the reaction 5-methyluridine(54) in tRNA + hydrogen sulfide + ATP = 5-methyl-2-thiouridine(54) in tRNA + AMP + diphosphate. The protein operates within tRNA modification. Its function is as follows. Catalyzes the ATP-dependent 2-thiolation of 5-methyluridine residue at position 54 in the T loop of tRNAs, leading to 5-methyl-2-thiouridine (m(5)s(2)U or s(2)T). This modification allows thermal stabilization of tRNAs in thermophilic microorganisms, and is required for cell growth at high temperatures. Can use free sulfide as sulfur source in vitro. The protein is tRNA-5-methyluridine(54) 2-sulfurtransferase of Thermotoga maritima (strain ATCC 43589 / DSM 3109 / JCM 10099 / NBRC 100826 / MSB8).